The chain runs to 417 residues: NADH-quinone oxidoreductase subunit D (417 aa).

The protein belongs to the complex I 49 kDa subunit family. In terms of assembly, NDH-1 is composed of 14 different subunits. Subunits NuoB, C, D, E, F, and G constitute the peripheral sector of the complex.

Its subcellular location is the cell inner membrane. It catalyses the reaction a quinone + NADH + 5 H(+)(in) = a quinol + NAD(+) + 4 H(+)(out). Functionally, NDH-1 shuttles electrons from NADH, via FMN and iron-sulfur (Fe-S) centers, to quinones in the respiratory chain. The immediate electron acceptor for the enzyme in this species is believed to be ubiquinone. Couples the redox reaction to proton translocation (for every two electrons transferred, four hydrogen ions are translocated across the cytoplasmic membrane), and thus conserves the redox energy in a proton gradient. The chain is NADH-quinone oxidoreductase subunit D from Legionella pneumophila subsp. pneumophila (strain Philadelphia 1 / ATCC 33152 / DSM 7513).